The chain runs to 298 residues: MTEQAISFAKDFLAGGIAAAISKTAVAPIERVKLLLQVQHASKQIAADKQYKGIVDCIVRIPKEQGVLSFWRGNLANVIRYFPTQALNFAFKDKYKQIFLGGVDKHTQFWRYFAGNLASGGAAGATSLCFVYPLDFARTRLAADVGKSGTEREFRGLGDCLVKITKSDGIRGLYQGFSVSVQGIIIYRAAYFGVYDTAKGMLPDPKNTHIVVSWMIAQTVTAVAGVVSYPFDTVRRRMMMQSGRKGADIMYTGTVDCWRKIFRDEGGKAFFKGAWSNVLRGMGGAFVLVLYDELKKVI.

Position 1 is an N-acetylmethionine (Met-1). At 1 to 7 the chain is on the mitochondrial intermembrane side; that stretch reads MTEQAIS. The residue at position 2 (Thr-2) is an N-acetylthreonine; in ADP/ATP translocase 3, N-terminally processed. One copy of the Solcar 1 repeat lies at 6–98; that stretch reads ISFAKDFLAG…FAFKDKYKQI (93 aa). A helical transmembrane segment spans residues 8–37; sequence FAKDFLAGGIAAAISKTAVAPIERVKLLLQ. The Mitochondrial matrix segment spans residues 38–74; sequence VQHASKQIAADKQYKGIVDCIVRIPKEQGVLSFWRGN. The residue at position 52 (Lys-52) is an N6,N6,N6-trimethyllysine. The helical transmembrane segment at 75–99 threads the bilayer; the sequence is LANVIRYFPTQALNFAFKDKYKQIF. ADP contacts are provided by Arg-80 and Lys-92. Residues 100-109 are Mitochondrial intermembrane-facing; the sequence is LGGVDKHTQF. Lys-105 bears the N6-acetyllysine mark. Residues 110 to 130 traverse the membrane as a helical segment; the sequence is WRYFAGNLASGGAAGATSLCF. 2 Solcar repeats span residues 111–201 and 212–297; these read RYFA…AKGM and VSWM…LKKV. Topologically, residues 131 to 178 are mitochondrial matrix; it reads VYPLDFARTRLAADVGKSGTEREFRGLGDCLVKITKSDGIRGLYQGFS. Residues 179–199 form a helical membrane-spanning segment; that stretch reads VSVQGIIIYRAAYFGVYDTAK. Over 200-210 the chain is Mitochondrial intermembrane; the sequence is GMLPDPKNTHI. Residues 211–231 traverse the membrane as a helical segment; that stretch reads VVSWMIAQTVTAVAGVVSYPF. The Mitochondrial matrix portion of the chain corresponds to 232–273; it reads DTVRRRMMMQSGRKGADIMYTGTVDCWRKIFRDEGGKAFFKG. ADP is bound at residue Arg-235. The segment at 235 to 240 is important for transport activity; the sequence is RRRMMM. Residues 235–240 carry the Nucleotide carrier signature motif motif; it reads RRRMMM. Residue Lys-268 is modified to N6-acetyllysine. The helical transmembrane segment at 274–291 threads the bilayer; that stretch reads AWSNVLRGMGGAFVLVLY. Residues 292-298 are Mitochondrial intermembrane-facing; sequence DELKKVI.

This sequence belongs to the mitochondrial carrier (TC 2.A.29) family. In terms of assembly, monomer. Found in a complex with ARL2, ARL2BP and SLC25A6/ANT3. As to quaternary structure, (Microbial infection) Interacts with influenza A virus PB1-F2 protein. (Microbial infection) Interacts with HIV-1 Vpr. Post-translationally, trimethylated by ANTKMT at Lys-52. As to expression, expressed in erythrocytes (at protein level).

It localises to the mitochondrion inner membrane. Its subcellular location is the membrane. The catalysed reaction is ADP(in) + ATP(out) = ADP(out) + ATP(in). It catalyses the reaction H(+)(in) = H(+)(out). Its activity is regulated as follows. The matrix-open state (m-state) is inhibited by the membrane-permeable bongkrekic acid (BKA). The cytoplasmic-open state (c-state) is inhibited by the membrane-impermeable toxic inhibitor carboxyatractyloside (CATR). Proton transporter activity is inhibited by ADP:ATP antiporter activity. In terms of biological role, ADP:ATP antiporter that mediates import of ADP into the mitochondrial matrix for ATP synthesis, and export of ATP out to fuel the cell. Cycles between the cytoplasmic-open state (c-state) and the matrix-open state (m-state): operates by the alternating access mechanism with a single substrate-binding site intermittently exposed to either the cytosolic (c-state) or matrix (m-state) side of the inner mitochondrial membrane. In addition to its ADP:ATP antiporter activity, also involved in mitochondrial uncoupling and mitochondrial permeability transition pore (mPTP) activity. Plays a role in mitochondrial uncoupling by acting as a proton transporter: proton transport uncouples the proton flows via the electron transport chain and ATP synthase to reduce the efficiency of ATP production and cause mitochondrial thermogenesis. Proton transporter activity is inhibited by ADP:ATP antiporter activity, suggesting that SLC25A6/ANT3 acts as a master regulator of mitochondrial energy output by maintaining a delicate balance between ATP production (ADP:ATP antiporter activity) and thermogenesis (proton transporter activity). Proton transporter activity requires free fatty acids as cofactor, but does not transport it. Also plays a key role in mPTP opening, a non-specific pore that enables free passage of the mitochondrial membranes to solutes of up to 1.5 kDa, and which contributes to cell death. It is however unclear if SLC25A6/ANT3 constitutes a pore-forming component of mPTP or regulates it. The protein is ADP/ATP translocase 3 of Homo sapiens (Human).